Here is a 628-residue protein sequence, read N- to C-terminus: 1-deoxy-D-xylulose-5-phosphate synthase (628 aa).

Thiamine diphosphate is bound by residues histidine 80 and 121 to 123 (GHS). Mg(2+) is bound at residue aspartate 152. Residues 153–154 (GG), asparagine 181, tyrosine 289, and glutamate 370 contribute to the thiamine diphosphate site. Asparagine 181 is a binding site for Mg(2+).

It belongs to the transketolase family. DXPS subfamily. In terms of assembly, homodimer. It depends on Mg(2+) as a cofactor. Thiamine diphosphate serves as cofactor.

It catalyses the reaction D-glyceraldehyde 3-phosphate + pyruvate + H(+) = 1-deoxy-D-xylulose 5-phosphate + CO2. Its pathway is metabolic intermediate biosynthesis; 1-deoxy-D-xylulose 5-phosphate biosynthesis; 1-deoxy-D-xylulose 5-phosphate from D-glyceraldehyde 3-phosphate and pyruvate: step 1/1. Its function is as follows. Catalyzes the acyloin condensation reaction between C atoms 2 and 3 of pyruvate and glyceraldehyde 3-phosphate to yield 1-deoxy-D-xylulose-5-phosphate (DXP). The sequence is that of 1-deoxy-D-xylulose-5-phosphate synthase from Alkalilimnicola ehrlichii (strain ATCC BAA-1101 / DSM 17681 / MLHE-1).